Consider the following 615-residue polypeptide: Vitamin B12 transporter BtuB (615 aa).

Residues 1–20 (MIKKVSLMTALSVTAFSGWA) form the signal peptide. Positions 25–32 (DSLVVTAN) match the TonB box motif. The 115-residue stretch at 37 to 151 (PANTVLAPTS…IGGVVNIITT (115 aa)) folds into the TBDR plug domain. Cyanocob(III)alamin contacts are provided by residues serine 84, asparagine 91, and 109 to 110 (VT). The 462-residue stretch at 154 to 615 (KDGTTLNAGV…EYTLSGSYTF (462 aa)) folds into the TBDR beta-barrel domain. The next 3 membrane-spanning stretches (beta stranded) occupy residues 157 to 164 (TTLNAGVG), 168 to 177 (YQNYGGSTQQ), and 183 to 194 (TRVTLAGDYTYT). Positions 198, 210, 212, and 214 each coordinate Ca(2+). Transmembrane regions (beta stranded) follow at residues 216-226 (YMNKTIYGALE) and 231-247 (DQWSGFVRGFGYSNRTA). Ca(2+) contacts are provided by tyrosine 248 and aspartate 249. Position 250 (alanine 250) interacts with cyanocob(III)alamin. Residue aspartate 262 coordinates Ca(2+). A run of 17 beta stranded transmembrane segments spans residues 264–278 (RQLYSQTWDTGLRFN), 280–297 (GIFHSQLLSSYSHSKDYN), 310–326 (TLDEIKQYNVQWTNSVD), 329–338 (HGNVGAGVDW), 354–370 (TNLRNTGVYLTALQKFG), 372–382 (FTLEGAARSDD), 386–401 (FGRHGTWQSSAAWEFI), 404–418 (YRFIASYGTAYKAPN), 435–444 (ESKQWEGAFE), 450–459 (VSWRVSAYRN), 474–491 (YYNVGKARIKGVEATASF), 495–510 (PLTHTVGYDYVDARNA), 518–530 (RRAKQQVKYQLDT), 536–551 (DWSLTYHYLGTRYDTD), 559–573 (KVKMGGVSLWDLAVS), 586–597 (IANLFDKDYETV), and 603–615 (AGREYTLSGSYTF). Threonine 310 is a binding site for cyanocob(III)alamin. Arginine 518 contributes to the cyanocob(III)alamin binding site. Residues 598–615 (YGYETAGREYTLSGSYTF) carry the TonB C-terminal box motif.

This sequence belongs to the TonB-dependent receptor family. BtuB (TC 1.B.14.3.1) subfamily.

It localises to the cell outer membrane. In terms of biological role, involved in the active translocation of vitamin B12 (cyanocobalamin) across the outer membrane to the periplasmic space. It derives its energy for transport by interacting with the trans-periplasmic membrane protein TonB. This chain is Vitamin B12 transporter BtuB, found in Enterobacter sp. (strain 638).